A 21-amino-acid polypeptide reads, in one-letter code: Protein YmjD (21 aa).

In Escherichia coli (strain K12), this protein is Protein YmjD (ymjD).